The sequence spans 126 residues: Glycine cleavage system H protein (126 aa).

In terms of domain architecture, Lipoyl-binding spans 22 to 104 (VATIGITEYA…YEKAWMVKVE (83 aa)). Residue Lys63 is modified to N6-lipoyllysine.

The protein belongs to the GcvH family. The glycine cleavage system is composed of four proteins: P, T, L and H. Requires (R)-lipoate as cofactor.

The glycine cleavage system catalyzes the degradation of glycine. The H protein shuttles the methylamine group of glycine from the P protein to the T protein. Functionally, is also involved in protein lipoylation via its role as an octanoyl/lipoyl carrier protein intermediate. The polypeptide is Glycine cleavage system H protein (Staphylococcus aureus (strain JH1)).